Consider the following 123-residue polypeptide: Highly acidic elicitin 20 (123 aa).

Positions 1–20 are cleaved as a signal peptide; that stretch reads MQFTALFAATAVALVGSVSA. Intrachain disulfides connect C23-C91, C47-C76, and C71-C115.

The protein belongs to the elicitin family.

It is found in the secreted. Functionally, induces local and distal defense responses (incompatible hypersensitive reaction) in plants from the solanaceae and cruciferae families. Elicits leaf necrosis and causes the accumulation of pathogenesis-related proteins. Might interact with the lipidic molecules of the plasma membrane. This Phytophthora cryptogea protein is Highly acidic elicitin 20 (B20).